A 445-amino-acid chain; its full sequence is Glucose-6-phosphate isomerase (445 aa).

The Proton donor role is filled by E284. Residues H305 and K419 contribute to the active site.

It belongs to the GPI family.

Its subcellular location is the cytoplasm. The enzyme catalyses alpha-D-glucose 6-phosphate = beta-D-fructose 6-phosphate. It participates in carbohydrate biosynthesis; gluconeogenesis. It functions in the pathway carbohydrate degradation; glycolysis; D-glyceraldehyde 3-phosphate and glycerone phosphate from D-glucose: step 2/4. Its function is as follows. Catalyzes the reversible isomerization of glucose-6-phosphate to fructose-6-phosphate. The chain is Glucose-6-phosphate isomerase from Leptospira borgpetersenii serovar Hardjo-bovis (strain JB197).